The chain runs to 68 residues: Protein SlyX homolog (68 aa).

The protein belongs to the SlyX family.

The polypeptide is Protein SlyX homolog (Ectopseudomonas mendocina (strain ymp) (Pseudomonas mendocina)).